The following is a 427-amino-acid chain: Probable glucuronosyltransferase Os03g0107900 (427 aa).

At 1-33 (MAMRGDPKQRRASASAPHGGAAHHVADKLRRHS) the chain is on the cytoplasmic side. The chain crosses the membrane as a helical; Signal-anchor for type II membrane protein span at residues 34 to 54 (TFLLLLLLLWFALSLYLFLSA). The Lumenal segment spans residues 55–427 (TPPPPRPAFL…QRRHVESWKR (373 aa)). 4 N-linked (GlcNAc...) asparagine glycosylation sites follow: Asn136, Asn168, Asn264, and Asn374.

It belongs to the glycosyltransferase 47 family.

Its subcellular location is the golgi apparatus membrane. In terms of biological role, involved in the synthesis of glucuronoxylan hemicellulose in secondary cell walls. This Oryza sativa subsp. japonica (Rice) protein is Probable glucuronosyltransferase Os03g0107900.